A 447-amino-acid chain; its full sequence is Xylose isomerase (447 aa).

Active-site residues include His-102 and Asp-105. Residues Glu-233, Glu-269, His-272, Asp-297, Asp-308, Asp-310, and Asp-340 each contribute to the Mg(2+) site.

Belongs to the xylose isomerase family. Homotetramer. It depends on Mg(2+) as a cofactor.

The protein localises to the cytoplasm. The enzyme catalyses alpha-D-xylose = alpha-D-xylulofuranose. This chain is Xylose isomerase, found in Pediococcus pentosaceus (strain ATCC 25745 / CCUG 21536 / LMG 10740 / 183-1w).